The primary structure comprises 386 residues: Patatin-04/09 (386 aa).

A signal peptide spans 1–23 (MATTKSFLILFFMILATTSSTCA). A PNPLA domain is found at 32-229 (LSIDGGGIKG…TVGDPALLSL (198 aa)). The GXGXXG signature appears at 36–41 (GGGIKG). The GXSXG signature appears at 75 to 79 (GTSTG). Catalysis depends on Ser-77, which acts as the Nucleophile. N-linked (GlcNAc...) asparagine glycosylation is present at Asn-115. Catalysis depends on Asp-215, which acts as the Proton acceptor. The DGA/G signature appears at 215 to 217 (DGG). Residues 321–384 (ENALNGTTTE…DRKKLRANKA (64 aa)) adopt a coiled-coil conformation. Residue Asn-325 is glycosylated (N-linked (GlcNAc...) asparagine).

This sequence belongs to the patatin family. As to expression, tuber.

Its subcellular location is the vacuole. In terms of biological role, probable lipolytic acyl hydrolase (LAH), an activity which is thought to be involved in the response of tubers to pathogens. In Solanum tuberosum (Potato), this protein is Patatin-04/09.